A 258-amino-acid chain; its full sequence is Acyl-[acyl-carrier-protein]--UDP-N-acetylglucosamine O-acyltransferase (258 aa).

The protein belongs to the transferase hexapeptide repeat family. LpxA subfamily. In terms of assembly, homotrimer.

The protein resides in the cytoplasm. The catalysed reaction is a (3R)-hydroxyacyl-[ACP] + UDP-N-acetyl-alpha-D-glucosamine = a UDP-3-O-[(3R)-3-hydroxyacyl]-N-acetyl-alpha-D-glucosamine + holo-[ACP]. The protein operates within glycolipid biosynthesis; lipid IV(A) biosynthesis; lipid IV(A) from (3R)-3-hydroxytetradecanoyl-[acyl-carrier-protein] and UDP-N-acetyl-alpha-D-glucosamine: step 1/6. Functionally, involved in the biosynthesis of lipid A, a phosphorylated glycolipid that anchors the lipopolysaccharide to the outer membrane of the cell. The chain is Acyl-[acyl-carrier-protein]--UDP-N-acetylglucosamine O-acyltransferase from Syntrophobacter fumaroxidans (strain DSM 10017 / MPOB).